Reading from the N-terminus, the 458-residue chain is ATP synthase subunit beta (458 aa).

ATP is bound at residue 148-155 (GGAGVGKT).

This sequence belongs to the ATPase alpha/beta chains family. F-type ATPases have 2 components, CF(1) - the catalytic core - and CF(0) - the membrane proton channel. CF(1) has five subunits: alpha(3), beta(3), gamma(1), delta(1), epsilon(1). CF(0) has three main subunits: a(1), b(2) and c(9-12). The alpha and beta chains form an alternating ring which encloses part of the gamma chain. CF(1) is attached to CF(0) by a central stalk formed by the gamma and epsilon chains, while a peripheral stalk is formed by the delta and b chains.

The protein resides in the cell inner membrane. The catalysed reaction is ATP + H2O + 4 H(+)(in) = ADP + phosphate + 5 H(+)(out). In terms of biological role, produces ATP from ADP in the presence of a proton gradient across the membrane. The catalytic sites are hosted primarily by the beta subunits. The sequence is that of ATP synthase subunit beta from Pseudomonas putida (strain GB-1).